We begin with the raw amino-acid sequence, 288 residues long: Ribosomal RNA small subunit methyltransferase A (288 aa).

Asn-37, Leu-39, Gly-64, Glu-86, Asp-112, and Asn-131 together coordinate S-adenosyl-L-methionine.

Belongs to the class I-like SAM-binding methyltransferase superfamily. rRNA adenine N(6)-methyltransferase family. RsmA subfamily.

It is found in the cytoplasm. The catalysed reaction is adenosine(1518)/adenosine(1519) in 16S rRNA + 4 S-adenosyl-L-methionine = N(6)-dimethyladenosine(1518)/N(6)-dimethyladenosine(1519) in 16S rRNA + 4 S-adenosyl-L-homocysteine + 4 H(+). Its function is as follows. Specifically dimethylates two adjacent adenosines (A1518 and A1519) in the loop of a conserved hairpin near the 3'-end of 16S rRNA in the 30S particle. May play a critical role in biogenesis of 30S subunits. The protein is Ribosomal RNA small subunit methyltransferase A of Rhodospirillum rubrum (strain ATCC 11170 / ATH 1.1.1 / DSM 467 / LMG 4362 / NCIMB 8255 / S1).